We begin with the raw amino-acid sequence, 166 residues long: Large ribosomal subunit protein eL21 (166 aa).

The protein belongs to the eukaryotic ribosomal protein eL21 family. In terms of assembly, component of the large ribosomal subunit.

The protein localises to the cytoplasm. Its subcellular location is the cytosol. The protein resides in the endoplasmic reticulum. In terms of biological role, component of the large ribosomal subunit. The ribosome is a large ribonucleoprotein complex responsible for the synthesis of proteins in the cell. This chain is Large ribosomal subunit protein eL21 (RPL21), found in Entamoeba histolytica (strain ATCC 30459 / HM-1:IMSS / ABRM).